A 520-amino-acid chain; its full sequence is 2-isopropylmalate synthase (520 aa).

The region spanning 12-274 (VLIFDTTLRD…TTGIDTTQIM (263 aa)) is the Pyruvate carboxyltransferase domain. Mn(2+) is bound by residues D21, H209, H211, and N245. Residues 398–520 (RLLSLTVIAG…RLHAQHAAAE (123 aa)) are regulatory domain.

It belongs to the alpha-IPM synthase/homocitrate synthase family. LeuA type 1 subfamily. Homodimer. It depends on Mn(2+) as a cofactor.

Its subcellular location is the cytoplasm. The enzyme catalyses 3-methyl-2-oxobutanoate + acetyl-CoA + H2O = (2S)-2-isopropylmalate + CoA + H(+). It functions in the pathway amino-acid biosynthesis; L-leucine biosynthesis; L-leucine from 3-methyl-2-oxobutanoate: step 1/4. Catalyzes the condensation of the acetyl group of acetyl-CoA with 3-methyl-2-oxobutanoate (2-ketoisovalerate) to form 3-carboxy-3-hydroxy-4-methylpentanoate (2-isopropylmalate). The protein is 2-isopropylmalate synthase of Methylobacterium nodulans (strain LMG 21967 / CNCM I-2342 / ORS 2060).